A 99-amino-acid chain; its full sequence is Cytochrome c oxidase subunit 4 isoform 1, mitochondrial (99 aa).

At 1–73 the chain is on the mitochondrial matrix side; it reads SVVKSEDFTL…SFAEMNRRSN (73 aa). At Lys-4 the chain carries N6-acetyllysine; alternate. Lys-4 bears the N6-succinyllysine; alternate mark. Lys-28 carries the N6-acetyllysine modification. 2 positions are modified to phosphoserine: Ser-31 and Ser-33. N6-acetyllysine; alternate is present on Lys-35. Lys-35 carries the N6-succinyllysine; alternate modification. Lys-42 is subject to N6-acetyllysine. The helical transmembrane segment at 74-99 threads the bilayer; it reads EWKTVVGTAMFFIGITALVIMWEKLY.

Belongs to the cytochrome c oxidase IV family. In terms of assembly, component of the cytochrome c oxidase (complex IV, CIV), a multisubunit enzyme composed of 14 subunits. The complex is composed of a catalytic core of 3 subunits MT-CO1, MT-CO2 and MT-CO3, encoded in the mitochondrial DNA, and 11 supernumerary subunits COX4I, COX5A, COX5B, COX6A, COX6B, COX6C, COX7A, COX7B, COX7C, COX8 and NDUFA4, which are encoded in the nuclear genome. The complex exists as a monomer or a dimer and forms supercomplexes (SCs) in the inner mitochondrial membrane with NADH-ubiquinone oxidoreductase (complex I, CI) and ubiquinol-cytochrome c oxidoreductase (cytochrome b-c1 complex, complex III, CIII), resulting in different assemblies (supercomplex SCI(1)III(2)IV(1) and megacomplex MCI(2)III(2)IV(2)). Interacts with PHB2; the interaction decreases in absence of SPHK2. Interacts with AFG1L. Interacts with ABCB7; this interaction allows the regulation of cellular iron homeostasis and cellular reactive oxygen species (ROS) levels in cardiomyocytes. Interacts with FLVCR2; this interaction occurs in the absence of heme and is disrupted upon heme binding. Interacts with IRGC.

The protein localises to the mitochondrion inner membrane. It functions in the pathway energy metabolism; oxidative phosphorylation. In terms of biological role, component of the cytochrome c oxidase, the last enzyme in the mitochondrial electron transport chain which drives oxidative phosphorylation. The respiratory chain contains 3 multisubunit complexes succinate dehydrogenase (complex II, CII), ubiquinol-cytochrome c oxidoreductase (cytochrome b-c1 complex, complex III, CIII) and cytochrome c oxidase (complex IV, CIV), that cooperate to transfer electrons derived from NADH and succinate to molecular oxygen, creating an electrochemical gradient over the inner membrane that drives transmembrane transport and the ATP synthase. Cytochrome c oxidase is the component of the respiratory chain that catalyzes the reduction of oxygen to water. Electrons originating from reduced cytochrome c in the intermembrane space (IMS) are transferred via the dinuclear copper A center (CU(A)) of subunit 2 and heme A of subunit 1 to the active site in subunit 1, a binuclear center (BNC) formed by heme A3 and copper B (CU(B)). The BNC reduces molecular oxygen to 2 water molecules using 4 electrons from cytochrome c in the IMS and 4 protons from the mitochondrial matrix. This chain is Cytochrome c oxidase subunit 4 isoform 1, mitochondrial (COX4I1), found in Mandrillus sphinx (Mandrill).